The primary structure comprises 686 residues: MAM domain-containing protein 2 (686 aa).

An N-terminal signal peptide occupies residues 1 to 18 (MLLRGVLLALQALQLAGA). MAM domains lie at 24–169 (GSCA…YCIE), 168–329 (IECD…HCQN), 340–498 (ASCN…SCSS), and 507–666 (GECT…PCGE). Asn134 and Asn329 each carry an N-linked (GlcNAc...) asparagine glycan. Disordered stretches follow at residues 521–543 (EKRN…TGPK) and 665–686 (GEME…EIEY). N-linked (GlcNAc...) asparagine glycosylation is present at Asn524.

Post-translationally, O-glycosylated.

It localises to the secreted. The protein localises to the extracellular space. It is found in the extracellular matrix. The protein is MAM domain-containing protein 2 (MAMDC2) of Homo sapiens (Human).